Consider the following 417-residue polypeptide: Serine/threonine transporter SstT (417 aa).

The next 8 membrane-spanning stretches (helical) occupy residues 21-41 (ILAG…VAKM), 49-69 (FISA…MASI), 83-103 (ILVL…VASF), 142-162 (ALIN…GLAL), 193-213 (IGIF…ALAG), 218-238 (LLVL…LIVF), 291-311 (IPLG…ILTL), and 331-351 (LVAA…LLLI).

This sequence belongs to the dicarboxylate/amino acid:cation symporter (DAACS) (TC 2.A.23) family.

It localises to the cell inner membrane. It carries out the reaction L-serine(in) + Na(+)(in) = L-serine(out) + Na(+)(out). The catalysed reaction is L-threonine(in) + Na(+)(in) = L-threonine(out) + Na(+)(out). In terms of biological role, involved in the import of serine and threonine into the cell, with the concomitant import of sodium (symport system). This is Serine/threonine transporter SstT from Proteus mirabilis (strain HI4320).